The following is a 516-amino-acid chain: Probable D,D-dipeptide-binding periplasmic protein DdpA (516 aa).

An N-terminal signal peptide occupies residues 1–25 (MKRSISFRPTLLALVLATNFPVAHA).

It belongs to the bacterial solute-binding protein 5 family. The complex is composed of two ATP-binding proteins (DdpD and DdpF), two transmembrane proteins (DdpB and DdpC) and a solute-binding protein (DdpA).

The protein localises to the periplasm. Part of the ABC transporter complex DdpABCDF, which is probably involved in D,D-dipeptide transport. The polypeptide is Probable D,D-dipeptide-binding periplasmic protein DdpA (ddpA) (Escherichia coli (strain K12)).